The primary structure comprises 240 residues: Uridylate kinase (240 aa).

Residue 13–16 coordinates ATP; the sequence is KFSG. G55 provides a ligand contact to UMP. Residues G56 and R60 each coordinate ATP. UMP is bound by residues D76 and 137 to 144; that span reads TGNPFFTT. 3 residues coordinate ATP: T164, Y170, and D173.

Belongs to the UMP kinase family. As to quaternary structure, homohexamer.

The protein resides in the cytoplasm. It carries out the reaction UMP + ATP = UDP + ADP. It participates in pyrimidine metabolism; CTP biosynthesis via de novo pathway; UDP from UMP (UMPK route): step 1/1. With respect to regulation, inhibited by UTP. Functionally, catalyzes the reversible phosphorylation of UMP to UDP. In Helicobacter acinonychis (strain Sheeba), this protein is Uridylate kinase.